The following is a 249-amino-acid chain: Type III pantothenate kinase (249 aa).

6–13 (DAGNSRIK) lines the ATP pocket. Substrate is bound by residues Phe77 and 98–101 (GVDR). Asp100 functions as the Proton acceptor in the catalytic mechanism. Asp121 contacts K(+). Ser124 lines the ATP pocket. Thr177 provides a ligand contact to substrate.

It belongs to the type III pantothenate kinase family. Homodimer. Requires NH4(+) as cofactor. K(+) serves as cofactor.

It is found in the cytoplasm. It catalyses the reaction (R)-pantothenate + ATP = (R)-4'-phosphopantothenate + ADP + H(+). Its pathway is cofactor biosynthesis; coenzyme A biosynthesis; CoA from (R)-pantothenate: step 1/5. Catalyzes the phosphorylation of pantothenate (Pan), the first step in CoA biosynthesis. The polypeptide is Type III pantothenate kinase (Teredinibacter turnerae (strain ATCC 39867 / T7901)).